Reading from the N-terminus, the 68-residue chain is DNA-directed RNA polymerase subunit Rpo10 (68 aa).

Residues C7, C10, C44, and C45 each contribute to the Zn(2+) site.

It belongs to the archaeal Rpo10/eukaryotic RPB10 RNA polymerase subunit family. As to quaternary structure, part of the RNA polymerase complex. Zn(2+) serves as cofactor.

Its subcellular location is the cytoplasm. It catalyses the reaction RNA(n) + a ribonucleoside 5'-triphosphate = RNA(n+1) + diphosphate. In terms of biological role, DNA-dependent RNA polymerase (RNAP) catalyzes the transcription of DNA into RNA using the four ribonucleoside triphosphates as substrates. The polypeptide is DNA-directed RNA polymerase subunit Rpo10 (Methanococcus maripaludis (strain DSM 14266 / JCM 13030 / NBRC 101832 / S2 / LL)).